The sequence spans 355 residues: S-adenosylmethionine:tRNA ribosyltransferase-isomerase (355 aa).

It belongs to the QueA family. In terms of assembly, monomer.

The protein localises to the cytoplasm. The enzyme catalyses 7-aminomethyl-7-carbaguanosine(34) in tRNA + S-adenosyl-L-methionine = epoxyqueuosine(34) in tRNA + adenine + L-methionine + 2 H(+). Its pathway is tRNA modification; tRNA-queuosine biosynthesis. Functionally, transfers and isomerizes the ribose moiety from AdoMet to the 7-aminomethyl group of 7-deazaguanine (preQ1-tRNA) to give epoxyqueuosine (oQ-tRNA). The sequence is that of S-adenosylmethionine:tRNA ribosyltransferase-isomerase from Burkholderia orbicola (strain AU 1054).